Reading from the N-terminus, the 1125-residue chain is Kinase and exchange factor for Rac B (1125 aa).

3 disordered regions span residues 50–175 (VTGG…ASIN), 247–287 (SVPG…GGKF), and 322–362 (KTRD…VNSD). Low complexity predominate over residues 59 to 91 (NNQQQQQNNNNNNNNNNNNNNNNNNNNNNNNNN). Residues 92 to 106 (SGEISSNNSTPSILF) are compositionally biased toward polar residues. Positions 113 to 124 (TAPPAPPQPTTP) are enriched in pro residues. Residues 137–161 (NINQQPIGGVNNNNNNNNKDSPSNK) show a composition bias toward low complexity. The DH domain maps to 380 to 571 (KRRQVSLQIL…KSTVDYVKEK (192 aa)). The 222-residue stretch at 601–822 (RYVREGMLTE…WIQAIHANII (222 aa)) folds into the PH domain. 2 disordered regions span residues 693-729 (INNM…SNNN) and 761-791 (SNNN…YSNG). Over residues 694–729 (NNMTNNDSKSKNNNNNNSNGNNNNNNINSNSNSNNN) the composition is skewed to low complexity. The 270-residue stretch at 848–1117 (IKLCEQIGSG…QLVQKLTKML (270 aa)) folds into the Protein kinase domain. ATP contacts are provided by residues 854 to 862 (IGSGGSGCT) and K876. D971 acts as the Proton acceptor in catalysis.

It belongs to the protein kinase superfamily. STE Ser/Thr protein kinase family. Requires Mg(2+) as cofactor.

It carries out the reaction L-seryl-[protein] + ATP = O-phospho-L-seryl-[protein] + ADP + H(+). It catalyses the reaction L-threonyl-[protein] + ATP = O-phospho-L-threonyl-[protein] + ADP + H(+). In Dictyostelium discoideum (Social amoeba), this protein is Kinase and exchange factor for Rac B.